The chain runs to 412 residues: Divalent metal cation transporter MntH (412 aa).

10 helical membrane passes run 19–39, 46–66, 98–118, 122–142, 155–175, 196–216, 241–261, 286–306, 348–368, and 392–412; these read LSLM…GNFA, AAYG…AMLI, WVQA…GAAI, LLLG…TFLI, MVIG…LVFS, AVLL…IYLH, IAMT…AAAF, AAAV…TVVG, VLVL…VPLL, and LIVV…MSGI.

Belongs to the NRAMP family.

It localises to the cell inner membrane. Functionally, h(+)-stimulated, divalent metal cation uptake system. In Pectobacterium carotovorum subsp. carotovorum (strain PC1), this protein is Divalent metal cation transporter MntH.